A 211-amino-acid chain; its full sequence is Tudor-interacting repair regulator protein (211 aa).

Glycyl lysine isopeptide (Lys-Gly) (interchain with G-Cter in ubiquitin) cross-links involve residues lysine 10 and lysine 151. Residues 118-205 (TLEQLHAVEI…TEKQKKALEK (88 aa)) are interaction with PXN.

It belongs to the Nudix hydrolase family. TIRR subfamily. In terms of assembly, homodimer. Interacts with TP53BP1 (via the Tudor-like domain); interaction is abolished following DNA damage and TP53BP1 phosphorylation by ATM. Interacts (via the cytoplasmic part) with SDC4. Interacts with TGFB1I1 and PXN.

It is found in the nucleus. Functionally, key regulator of TP53BP1 required to stabilize TP53BP1 and regulate its recruitment to chromatin. In absence of DNA damage, interacts with the tandem Tudor-like domain of TP53BP1, masking the region that binds histone H4 dimethylated at 'Lys-20' (H4K20me2), thereby preventing TP53BP1 recruitment to chromatin and maintaining TP53BP1 localization to the nucleus. Following DNA damage, ATM-induced phosphorylation of TP53BP1 and subsequent recruitment of RIF1 leads to dissociate NUDT16L1/TIRR from TP53BP1, unmasking the tandem Tudor-like domain and allowing recruitment of TP53BP1 to DNA double strand breaks (DSBs). Binds U8 snoRNA. This is Tudor-interacting repair regulator protein from Mus musculus (Mouse).